We begin with the raw amino-acid sequence, 1312 residues long: Angiotensin-converting enzyme (1312 aa).

A signal peptide spans 1 to 34 (MGAASGQRGRWPLSPPLLMLSLLVLLLQPSPAPA). Residues 35 to 1264 (LDPGLQPGNF…LEPQQARVGQ (1230 aa)) are Extracellular-facing. 2 consecutive Peptidase M2 domains span residues 45-629 (SPDE…LGWP) and 648-1227 (ETDE…LGWP). 5 N-linked (GlcNAc...) asparagine glycosylation sites follow: N59, N79, N116, N151, and N165. C162 and C170 are disulfide-bonded. Y236 contacts chloride. An N-linked (GlcNAc...) asparagine glycan is attached at N323. C364 and C382 are oxidised to a cystine. H395 contributes to the Zn(2+) binding site. E396 serves as the catalytic Proton acceptor 1. Zn(2+) contacts are provided by H399 and E423. N514 carries N-linked (GlcNAc...) asparagine glycosylation. H525 functions as the Proton donor 1 in the catalytic mechanism. A chloride-binding site is contributed by R534. C550 and C562 form a disulfide bridge. The N-linked (GlcNAc...) asparagine glycan is linked to N682. Residues N700 and N719 are each glycosylated (N-linked (GlcNAc...) (complex) asparagine). Residues C762 and C768 are joined by a disulfide bond. N765 carries N-linked (GlcNAc...) asparagine glycosylation. Residues R796 and Y834 each contribute to the chloride site. The N-linked (GlcNAc...) asparagine glycan is linked to N947. Residues C962 and C980 are joined by a disulfide bond. H993 provides a ligand contact to Zn(2+). The Proton acceptor 2 role is filled by E994. 2 residues coordinate Zn(2+): H997 and E1021. W1095 and R1099 together coordinate chloride. Residue H1123 is the Proton donor 2 of the active site. Position 1132 (R1132) interacts with chloride. C1148 and C1160 are oxidised to a cystine. The N-linked (GlcNAc...) asparagine glycan is linked to N1196. Positions 1220-1261 (HGETLGWPEYNWAPNTARAEGSTAESNRVNFLGLYLEPQQAR) are juxtamembrane stalk. A helical membrane pass occupies residues 1265 to 1281 (WVLLFLGVALLVATVGL). Residues 1282–1312 (AHRLYNIRNHHSLRRPHRGPQFGSEVELRHS) lie on the Cytoplasmic side of the membrane. S1305 carries the post-translational modification Phosphoserine.

This sequence belongs to the peptidase M2 family. As to quaternary structure, monomer and homodimer; homodimerizes following binding to an inhibitor. Interacts with calmodulin (CALM1, CALM2 or CALM3); interaction takes place in the cytoplasmic region and regulates phosphorylation and proteolytic cleavage. It depends on Zn(2+) as a cofactor. Requires chloride as cofactor. Post-translationally, produced following proteolytic cleavage by secretase enzymes that cleave the transmembrane form in the juxtamembrane stalk region upstream of the transmembrane region. Cleavage can take place at different sites of the juxtamembrane stalk region. In terms of processing, phosphorylated by CK2 on Ser-1305; which allows membrane retention. Phosphorylated on tyrosine residues on its extracellular part, promoting cleavage by secretase enzymes and formation of the soluble form (Angiotensin-converting enzyme, soluble form). As to expression, highly expressed in kidney and lung; not expressed in the liver. In the brain, expressed in the cerebral cortex, hippocampus, cerebellum and basal ganglia/brainstem. Highly expressed in dopamine receptor DRD1-expressing neurons in the dorsal striatum and the nucleus accumbens of the brain. Specifically expressed in spermatocytes, adult testis.

Its subcellular location is the cell membrane. The protein localises to the cytoplasm. The protein resides in the secreted. It catalyses the reaction Release of a C-terminal dipeptide, oligopeptide-|-Xaa-Yaa, when Xaa is not Pro, and Yaa is neither Asp nor Glu. Thus, conversion of angiotensin I to angiotensin II, with increase in vasoconstrictor activity, but no action on angiotensin II.. It carries out the reaction angiotensin I + H2O = L-histidyl-L-leucine + angiotensin II. The enzyme catalyses bradykinin + H2O = L-Phe-L-Arg + bradykinin(1-7). The catalysed reaction is substance P + H2O = substance P(1-9) + L-Leu-L-Met-NH2. It catalyses the reaction substance P + H2O = substance P(1-8) + Gly-L-Leu-L-Met-NH2. It carries out the reaction substance P + H2O = L-Phe-L-Phe-Gly-L-Leu-L-Met-NH2 + substance P(1-6). The enzyme catalyses neurotensin + H2O = neurotensin(1-11) + L-isoleucyl-L-leucine. The catalysed reaction is goralatide + H2O = N-acetyl-L-seryl-L-aspartate + L-lysyl-L-proline. It catalyses the reaction Met-enkephalin + H2O = L-phenylalanyl-L-methionine + L-tyrosylglycylglycine. It carries out the reaction Leu-enkephalin + H2O = L-tyrosylglycylglycine + L-phenylalanyl-L-leucine. The enzyme catalyses Met-enkephalin-Arg-Phe + H2O = L-arginyl-L-phenylalanine + Met-enkephalin. The dipeptidyl carboxypeptidase activity is specifically inhibited by lisinopril, captopril and enalaprilat. The N-terminal catalytic domain, but not the C-terminal catalytic domain, is specifically inhibited by the phosphinic peptide RXP 407. Its activity is regulated as follows. The putative GPIase activity is nearly insensitive to captopril. Its function is as follows. Dipeptidyl carboxypeptidase that removes dipeptides from the C-terminus of a variety of circulating hormones, such as angiotensin I, bradykinin or enkephalins, thereby playing a key role in the regulation of blood pressure, electrolyte homeostasis or synaptic plasticity. Composed of two similar catalytic domains, each possessing a functional active site, with different selectivity for substrates. Plays a major role in the angiotensin-renin system that regulates blood pressure and sodium retention by the kidney by converting angiotensin I to angiotensin II, resulting in an increase of the vasoconstrictor activity of angiotensin. Also able to inactivate bradykinin, a potent vasodilator, and therefore enhance the blood pressure response. Acts as a regulator of synaptic transmission by mediating cleavage of neuropeptide hormones, such as substance P, neurotensin or enkephalins. Catalyzes degradation of different enkephalin neuropeptides (Met-enkephalin, Leu-enkephalin, Met-enkephalin-Arg-Phe and possibly Met-enkephalin-Arg-Gly-Leu). Acts as a regulator of synaptic plasticity in the nucleus accumbens of the brain by mediating cleavage of Met-enkephalin-Arg-Phe, a strong ligand of Mu-type opioid receptor OPRM1, into Met-enkephalin. Met-enkephalin-Arg-Phe cleavage by ACE decreases activation of OPRM1, leading to long-term synaptic potentiation of glutamate release. Also acts as a regulator of hematopoietic stem cell differentiation by mediating degradation of hemoregulatory peptide N-acetyl-SDKP (AcSDKP). Acts as a regulator of cannabinoid signaling pathway by mediating degradation of hemopressin, an antagonist peptide of the cannabinoid receptor CNR1. Involved in amyloid-beta metabolism by catalyzing degradation of Amyloid-beta protein 40 and Amyloid-beta protein 42 peptides, thereby preventing plaque formation. Catalyzes cleavage of cholecystokinin (maturation of Cholecystokinin-8 and Cholecystokinin-5) and Gonadoliberin-1 (both maturation and degradation) hormones. Degradation of hemoregulatory peptide N-acetyl-SDKP (AcSDKP) and amyloid-beta proteins is mediated by the N-terminal catalytic domain, while angiotensin I and cholecystokinin cleavage is mediated by the C-terminal catalytic region. Soluble form that is released in blood plasma and other body fluids following proteolytic cleavage in the juxtamembrane stalk region. Functionally, isoform produced by alternative promoter usage that is specifically expressed in spermatocytes and adult testis, and which is required for male fertility. In contrast to somatic isoforms, only contains one catalytic domain. Acts as a dipeptidyl carboxypeptidase that removes dipeptides from the C-terminus of substrates. The identity of substrates that are needed for male fertility is unknown. Isoform Testis-specific and isoform Somatic have distinct activities and cannot completely compensate for the loss of the other when expressed in somatic tissues or testis. May also have a glycosidase activity which releases GPI-anchored proteins from the membrane by cleaving the mannose linkage in the GPI moiety. The GPIase activity was reported to be essential for the egg-binding ability of the sperm. This activity is however unclear and has been challenged by other groups, suggesting that it may be indirect. The protein is Angiotensin-converting enzyme of Mus musculus (Mouse).